A 438-amino-acid polypeptide reads, in one-letter code: Serine hydroxymethyltransferase (438 aa).

(6S)-5,6,7,8-tetrahydrofolate is bound by residues Leu133 and 137 to 139; that span reads GHL. Position 242 is an N6-(pyridoxal phosphate)lysine (Lys242).

Belongs to the SHMT family. As to quaternary structure, homodimer. Pyridoxal 5'-phosphate serves as cofactor.

The protein resides in the cytoplasm. It catalyses the reaction (6R)-5,10-methylene-5,6,7,8-tetrahydrofolate + glycine + H2O = (6S)-5,6,7,8-tetrahydrofolate + L-serine. It functions in the pathway one-carbon metabolism; tetrahydrofolate interconversion. Its pathway is amino-acid biosynthesis; glycine biosynthesis; glycine from L-serine: step 1/1. Its function is as follows. Catalyzes the reversible interconversion of serine and glycine with tetrahydrofolate (THF) serving as the one-carbon carrier. This reaction serves as the major source of one-carbon groups required for the biosynthesis of purines, thymidylate, methionine, and other important biomolecules. Also exhibits THF-independent aldolase activity toward beta-hydroxyamino acids, producing glycine and aldehydes, via a retro-aldol mechanism. This is Serine hydroxymethyltransferase from Brucella canis (strain ATCC 23365 / NCTC 10854 / RM-666).